Reading from the N-terminus, the 162-residue chain is Cyclic pyranopterin monophosphate synthase (162 aa).

Residues 75–77 (MCH) and 116–117 (ME) contribute to the substrate site. Residue aspartate 131 is part of the active site.

Belongs to the MoaC family. As to quaternary structure, homohexamer; trimer of dimers.

The enzyme catalyses (8S)-3',8-cyclo-7,8-dihydroguanosine 5'-triphosphate = cyclic pyranopterin phosphate + diphosphate. It functions in the pathway cofactor biosynthesis; molybdopterin biosynthesis. Functionally, catalyzes the conversion of (8S)-3',8-cyclo-7,8-dihydroguanosine 5'-triphosphate to cyclic pyranopterin monophosphate (cPMP). The chain is Cyclic pyranopterin monophosphate synthase from Staphylococcus epidermidis (strain ATCC 35984 / DSM 28319 / BCRC 17069 / CCUG 31568 / BM 3577 / RP62A).